Here is a 123-residue protein sequence, read N- to C-terminus: Pre-B lymphocyte protein 3 (123 aa).

Positions 1–20 are cleaved as a signal peptide; that stretch reads MACRCLSFLLMGTFLSVSQT. Positions 21-123 constitute an Ig-like domain; the sequence is VLAQLDALLV…YCSVGYGFSP (103 aa). Residues cysteine 40 and cysteine 115 are joined by a disulfide bond.

This sequence belongs to the immunoglobulin superfamily. Expressed in B-cell precursors. Expressed in fetal liver, bone marrow, spleen and lymph node.

Associates with the Ig-mu chain to form a molecular complex that is expressed on the surface of pre-B-cells. This Homo sapiens (Human) protein is Pre-B lymphocyte protein 3 (VPREB3).